Reading from the N-terminus, the 415-residue chain is Histidine--tRNA ligase (415 aa).

It belongs to the class-II aminoacyl-tRNA synthetase family. In terms of assembly, homodimer.

Its subcellular location is the cytoplasm. The enzyme catalyses tRNA(His) + L-histidine + ATP = L-histidyl-tRNA(His) + AMP + diphosphate + H(+). The polypeptide is Histidine--tRNA ligase (Gluconacetobacter diazotrophicus (strain ATCC 49037 / DSM 5601 / CCUG 37298 / CIP 103539 / LMG 7603 / PAl5)).